The sequence spans 636 residues: Methionine--tRNA ligase (636 aa).

A 'HIGH' region motif is present at residues Tyr12–Ser22. Zn(2+) is bound by residues Cys127, Cys130, Cys145, and Cys148. Residues Lys298–Ser302 carry the 'KMSKS' region motif. Lys301 lines the ATP pocket. In terms of domain architecture, tRNA-binding spans Glu535 to Ser636.

The protein belongs to the class-I aminoacyl-tRNA synthetase family. MetG type 2A subfamily. In terms of assembly, homodimer. Requires Zn(2+) as cofactor.

The protein resides in the cytoplasm. It catalyses the reaction tRNA(Met) + L-methionine + ATP = L-methionyl-tRNA(Met) + AMP + diphosphate. Functionally, is required not only for elongation of protein synthesis but also for the initiation of all mRNA translation through initiator tRNA(fMet) aminoacylation. This chain is Methionine--tRNA ligase (metG), found in Fusobacterium nucleatum subsp. nucleatum (strain ATCC 25586 / DSM 15643 / BCRC 10681 / CIP 101130 / JCM 8532 / KCTC 2640 / LMG 13131 / VPI 4355).